A 104-amino-acid polypeptide reads, in one-letter code: N(4)-acetylcytidine amidohydrolase (104 aa).

In terms of domain architecture, ASCH spans Ile-6–Leu-102. Lys-21 functions as the Proton acceptor in the catalytic mechanism. Thr-24 (nucleophile) is an active-site residue. Glu-74 serves as the catalytic Proton donor.

It belongs to the N(4)-acetylcytidine amidohydrolase family.

It carries out the reaction N(4)-acetylcytidine + H2O = cytidine + acetate + H(+). The catalysed reaction is N(4)-acetyl-2'-deoxycytidine + H2O = 2'-deoxycytidine + acetate + H(+). The enzyme catalyses N(4)-acetylcytosine + H2O = cytosine + acetate + H(+). Catalyzes the hydrolysis of N(4)-acetylcytidine (ac4C). This Haemophilus influenzae (strain PittEE) protein is N(4)-acetylcytidine amidohydrolase.